The primary structure comprises 474 residues: Hydrogenobyrinate a,c-diamide synthase (474 aa).

The GATase cobBQ-type domain occupies 269–459 (VVAVAGGQAF…LHTHWAGCPQ (191 aa)). The active-site Nucleophile is the Cys-352.

This sequence belongs to the CobB/CbiA family. Mg(2+) serves as cofactor.

It catalyses the reaction hydrogenobyrinate + 2 L-glutamine + 2 ATP + 2 H2O = hydrogenobyrinate a,c-diamide + 2 L-glutamate + 2 ADP + 2 phosphate + 2 H(+). The protein operates within cofactor biosynthesis; adenosylcobalamin biosynthesis; cob(II)yrinate a,c-diamide from precorrin-2 (aerobic route): step 9/10. Catalyzes the ATP-dependent amidation of the two carboxylate groups at positions a and c of hydrogenobyrinate, using either L-glutamine or ammonia as the nitrogen source. The protein is Hydrogenobyrinate a,c-diamide synthase of Thermobifida fusca (strain YX).